Reading from the N-terminus, the 150-residue chain is Large ribosomal subunit protein bL9 (150 aa).

The protein belongs to the bacterial ribosomal protein bL9 family.

Functionally, binds to the 23S rRNA. This Polaromonas naphthalenivorans (strain CJ2) protein is Large ribosomal subunit protein bL9.